The chain runs to 396 residues: N-acetylglucosamine-6-phosphate deacetylase (396 aa).

Histidine 63, histidine 65, and glutamate 136 together coordinate Fe cation. 147–148 (AQ) is a substrate binding site. The Fe cation site is built by histidine 202 and histidine 223. Substrate contacts are provided by residues 226 to 227 (NA), arginine 234, and 255 to 258 (DGIH). Residue aspartate 281 coordinates Fe cation. The active-site Proton donor is aspartate 281. Residue 314–316 (LAG) coordinates substrate.

It belongs to the metallo-dependent hydrolases superfamily. NagA family. Homodimer. A divalent metal cation is required as a cofactor.

The catalysed reaction is N-acetyl-D-glucosamine 6-phosphate + H2O = D-glucosamine 6-phosphate + acetate. The protein operates within amino-sugar metabolism; N-acetylneuraminate degradation; D-fructose 6-phosphate from N-acetylneuraminate: step 4/5. Functionally, involved in the first committed step in the biosynthesis of amino-sugar-nucleotides. Catalyzes the hydrolysis of the N-acetyl group of N-acetylglucosamine-6-phosphate (GlcNAc-6-P) to yield glucosamine 6-phosphate and acetate. Essential for growth on N-acetylglucosamine. In Bacillus subtilis (strain 168), this protein is N-acetylglucosamine-6-phosphate deacetylase (nagA).